We begin with the raw amino-acid sequence, 127 residues long: Small ribosomal subunit protein uS12 (127 aa).

Residues 8-28 are disordered; the sequence is IRTEREKARQKTKSPALKQCP. D89 carries the post-translational modification 3-methylthioaspartic acid. The tract at residues 102 to 127 is disordered; that stretch reads LDTAGVKDRKQGRSKYGTKRPKEAKK. Over residues 113–127 the composition is skewed to basic residues; it reads GRSKYGTKRPKEAKK.

The protein belongs to the universal ribosomal protein uS12 family. Part of the 30S ribosomal subunit. Contacts proteins S8 and S17. May interact with IF1 in the 30S initiation complex.

In terms of biological role, with S4 and S5 plays an important role in translational accuracy. Interacts with and stabilizes bases of the 16S rRNA that are involved in tRNA selection in the A site and with the mRNA backbone. Located at the interface of the 30S and 50S subunits, it traverses the body of the 30S subunit contacting proteins on the other side and probably holding the rRNA structure together. The combined cluster of proteins S8, S12 and S17 appears to hold together the shoulder and platform of the 30S subunit. In Nostoc sp. (strain PCC 7120 / SAG 25.82 / UTEX 2576), this protein is Small ribosomal subunit protein uS12.